The sequence spans 185 residues: TATA-box-binding protein (185 aa).

Repeat copies occupy residues 3 to 78 (IQNI…REDL) and 94 to 176 (IQNI…AEKI).

It belongs to the TBP family.

General factor that plays a role in the activation of archaeal genes transcribed by RNA polymerase. Binds specifically to the TATA box promoter element which lies close to the position of transcription initiation. This chain is TATA-box-binding protein, found in Methanopyrus kandleri (strain AV19 / DSM 6324 / JCM 9639 / NBRC 100938).